A 413-amino-acid chain; its full sequence is Glucose-1-phosphate adenylyltransferase (413 aa).

Alpha-D-glucose 1-phosphate-binding positions include G161, 176-177 (EK), and S195.

It belongs to the bacterial/plant glucose-1-phosphate adenylyltransferase family. In terms of assembly, homotetramer.

It catalyses the reaction alpha-D-glucose 1-phosphate + ATP + H(+) = ADP-alpha-D-glucose + diphosphate. It participates in glycan biosynthesis; glycogen biosynthesis. Its function is as follows. Involved in the biosynthesis of ADP-glucose, a building block required for the elongation reactions to produce glycogen. Catalyzes the reaction between ATP and alpha-D-glucose 1-phosphate (G1P) to produce pyrophosphate and ADP-Glc. This chain is Glucose-1-phosphate adenylyltransferase, found in Anaeromyxobacter dehalogenans (strain 2CP-C).